The primary structure comprises 1704 residues: ABC transporter ced-7 (1704 aa).

Residues 23–43 (VWTLFELIIPCLLLGPLVYLV) form a helical membrane-spanning segment. N126 and N145 each carry an N-linked (GlcNAc...) asparagine glycan. The next 3 helical transmembrane spans lie at 256-276 (AFIDFFPFIWAFVTFINVIHI), 306-326 (VVMAFLKFFVIFLCSIIPLTF), and 334-354 (AALIVTVLMYGLGAVIFGAFV). A glycan (N-linked (GlcNAc...) asparagine) is linked at N359. 2 helical membrane passes run 362–382 (NSAIKAILVAWGAMIGISYKL) and 389–409 (ISSCFLYGLNINGAFALAVEA). 2 N-linked (GlcNAc...) asparagine glycosylation sites follow: N421 and N427. A helical transmembrane segment spans residues 436-456 (GWALVMMIVDILWMSIGALVV). N481 is a glycosylation site (N-linked (GlcNAc...) asparagine). The interval 511 to 536 (NPMASTSLNPPNADSDSLLEGSTEAD) is disordered. The segment covering 512–525 (PMASTSLNPPNADS) has biased composition (polar residues). The 232-residue stretch at 546-777 (IIVRNLVKIW…FGTGYLLTVV (232 aa)) folds into the ABC transporter 1 domain. 580–587 (GHNGAGKS) provides a ligand contact to ATP. N678, N727, and N899 each carry an N-linked (GlcNAc...) asparagine glycan. 2 stretches are compositionally biased toward polar residues: residues 888–902 (RQNSRISHNSRNASE) and 911–921 (DTQSSTKSADS). Positions 888 to 933 (RQNSRISHNSRNASEPSLKPAGYDTQSSTKSADSYQKLMDSQARGP) are disordered. A helical membrane pass occupies residues 963-983 (LFTQVLIPIILLGLVGSLTTL). N-linked (GlcNAc...) asparagine glycans are attached at residues N986, N1012, and N1045. Helical transmembrane passes span 1126–1146 (LAPMLILIFAMVTSTFVMFLI), 1153–1173 (FAHQQFLTGISPITFYSASLI), 1176–1196 (GILYSLICLIFLFMFLAFHWM), 1201–1221 (AIVILFWFLYFFSSVPFIYAV), 1234–1254 (LLIIWQVVISGAALLAVFLIF), 1266–1286 (ILVNIFMFLLPSYAFGSAIIT), and 1311–1331 (LMGTFGVCSFALFVLLQFKFV). One can recognise an ABC transporter 2 domain in the interval 1379-1603 (LVIKDLTKTF…YGNNYTMTLS (225 aa)). ATP is bound at residue 1411–1418 (GVNGAGKT). N-linked (GlcNAc...) asparagine glycosylation is found at N1597 and N1632.

The protein belongs to the ABC transporter superfamily. ABCA family. Ubiquitous in embryos. Expressed in larval germline precursors. Expression in larvae and adults is seen in amphid sheath cells, pharyngeal-intestinal valve and phasmid sheath cells. Low levels of expression are also seen in gonadal sheath cells.

Its subcellular location is the membrane. Functionally, functions in the engulfment of cell corpses during embryonic programmed cell death to translocate molecules that mediate homotypic adhesion between cell surfaces of the dying and engulfing cells. This chain is ABC transporter ced-7 (ced-7), found in Caenorhabditis elegans.